The chain runs to 612 residues: Phosphopentomutase (612 aa).

An N-acetylalanine modification is found at Ala-2. Residues Arg-63 and Ser-165 each coordinate alpha-D-glucose 1,6-bisphosphate. The active-site Phosphoserine intermediate is Ser-165. Mg(2+)-binding residues include Ser-165, Asp-322, Asp-324, and Asp-326. Phosphoserine is present on Ser-165. Alpha-D-glucose 1,6-bisphosphate contacts are provided by Asp-326, Arg-327, Thr-400, Glu-424, and Lys-438.

This sequence belongs to the phosphohexose mutase family. As to quaternary structure, monomer. Mg(2+) is required as a cofactor.

The protein localises to the cytoplasm. It localises to the cytosol. The catalysed reaction is alpha-D-ribose 1-phosphate = D-ribose 5-phosphate. It carries out the reaction 2-deoxy-alpha-D-ribose 1-phosphate = 2-deoxy-D-ribose 5-phosphate. The enzyme catalyses alpha-D-glucose 1-phosphate = alpha-D-glucose 6-phosphate. It catalyses the reaction O-phospho-L-seryl-[protein] + alpha-D-glucose 1-phosphate = alpha-D-glucose 1,6-bisphosphate + L-seryl-[protein]. The catalysed reaction is alpha-D-glucose 1,6-bisphosphate + L-seryl-[protein] = O-phospho-L-seryl-[protein] + alpha-D-glucose 6-phosphate. Its function is as follows. Catalyzes the conversion of the nucleoside breakdown products ribose-1-phosphate and deoxyribose-1-phosphate to the corresponding 5-phosphopentoses. Catalyzes the reversible isomerization of alpha-D-glucose 1-phosphate to alpha-D-glucose 6-phosphate but with a lower catalytic efficiency. The mechanism proceeds via the intermediate compound alpha-D-glucose 1,6-bisphosphate. In vitro, also has a low glucose 1,6-bisphosphate synthase activity which is most probably not physiologically relevant. The chain is Phosphopentomutase (PGM2) from Pongo abelii (Sumatran orangutan).